Here is a 253-residue protein sequence, read N- to C-terminus: N-acetylmuramoyl-L-alanine amidase CwlM (253 aa).

The MurNAc-LAA domain occupies 4–172; it reads IFIDPGHGGS…IARGHANGLA (169 aa). An SPOR domain is found at 179 to 253; the sequence is KNAAALYKVQ…AEFDTFIYQE (75 aa). A run of 2 repeats spans residues 184 to 219 and 220 to 253. Residues 184 to 253 are 2 X 35 AA approximate tandem repeats; it reads LYKVQIAAFR…AEFDTFIYQE (70 aa).

The protein belongs to the N-acetylmuramoyl-L-alanine amidase 3 family.

Its subcellular location is the secreted. The enzyme catalyses Hydrolyzes the link between N-acetylmuramoyl residues and L-amino acid residues in certain cell-wall glycopeptides.. Hydrolyzes the cell wall of M.luteus more efficiently than that of B.licheniformis and B.subtilis. The C-terminal region, including the repeats, determines substrate specificity. This chain is N-acetylmuramoyl-L-alanine amidase CwlM (cwlM), found in Bacillus licheniformis.